The primary structure comprises 339 residues: MLEDRRLEVLRAIVEDFVLSNEPVGSKALAERHNLGVSPATVRNDMSALEEEGYITQPHTSAGRIPTDKGYRLFVDRLSGVKPLSRAERRAIQSFLEGAVDLDDVVRRSVRLLAQLTRQVAVVQYPSLSSSSIRHIEVVTLGPYRLLMVLITDTGRVEQRIVDSLVPVDDEVAGELRSVLNCALAGRRLVDAPDIVAALPDSTRSELRPYLTTVAGAVLESLVERQEERIAMAGTANLTRSPVDFADSLRSILEALEEQVVLMKLIGSARETGTVTVRIGRETDVDALRSTAVVATGYGRGPFALGGMGVLGPMRMDYPGTMAAVRAVAKYVGELLGAD.

It belongs to the HrcA family.

In terms of biological role, negative regulator of class I heat shock genes (grpE-dnaK-dnaJ and groELS operons). Prevents heat-shock induction of these operons. The polypeptide is Heat-inducible transcription repressor HrcA (Frankia casuarinae (strain DSM 45818 / CECT 9043 / HFP020203 / CcI3)).